Reading from the N-terminus, the 248-residue chain is 3-deoxy-manno-octulosonate cytidylyltransferase (248 aa).

The protein belongs to the KdsB family.

It is found in the cytoplasm. The catalysed reaction is 3-deoxy-alpha-D-manno-oct-2-ulosonate + CTP = CMP-3-deoxy-beta-D-manno-octulosonate + diphosphate. It functions in the pathway nucleotide-sugar biosynthesis; CMP-3-deoxy-D-manno-octulosonate biosynthesis; CMP-3-deoxy-D-manno-octulosonate from 3-deoxy-D-manno-octulosonate and CTP: step 1/1. Its pathway is bacterial outer membrane biogenesis; lipopolysaccharide biosynthesis. In terms of biological role, activates KDO (a required 8-carbon sugar) for incorporation into bacterial lipopolysaccharide in Gram-negative bacteria. The protein is 3-deoxy-manno-octulosonate cytidylyltransferase of Desulfosudis oleivorans (strain DSM 6200 / JCM 39069 / Hxd3) (Desulfococcus oleovorans).